Here is a 100-residue protein sequence, read N- to C-terminus: Urease subunit gamma (100 aa).

Belongs to the urease gamma subunit family. Heterotrimer of UreA (gamma), UreB (beta) and UreC (alpha) subunits. Three heterotrimers associate to form the active enzyme.

The protein localises to the cytoplasm. The enzyme catalyses urea + 2 H2O + H(+) = hydrogencarbonate + 2 NH4(+). The protein operates within nitrogen metabolism; urea degradation; CO(2) and NH(3) from urea (urease route): step 1/1. The chain is Urease subunit gamma from Prochlorococcus marinus (strain MIT 9313).